The following is a 97-amino-acid chain: Mitochondrial import inner membrane translocase subunit Tim8 A (97 aa).

A Twin CX3C motif motif is present at residues 43 to 66; it reads CWEKCMDKPGPKLDSRAEACFVNC. Disulfide bonds link C43–C66 and C47–C62. A phosphoserine mark is found at S57, S87, S94, and S96.

This sequence belongs to the small Tim family. In terms of assembly, heterohexamer; composed of 3 copies of TIMM8A and 3 copies of TIMM13, named soluble 70 kDa complex. Associates with the TIM22 complex, whose core is composed of TIMM22. Present at high level in liver and brain, and at lower level in muscle and heart. In CNS sections, it is predominantly present in the soma and the dendritic portion of the Purkinje cells of the cerebellum, but not in the glial cells. Scattered expression also is also detected in the brain stem, olfactory bulb, substantia nigra, hippocampus and striatum (at protein level). Ubiquitously expressed.

It localises to the mitochondrion inner membrane. Functionally, mitochondrial intermembrane chaperone that participates in the import and insertion of some multi-pass transmembrane proteins into the mitochondrial inner membrane. Also required for the transfer of beta-barrel precursors from the TOM complex to the sorting and assembly machinery (SAM complex) of the outer membrane. Acts as a chaperone-like protein that protects the hydrophobic precursors from aggregation and guide them through the mitochondrial intermembrane space. The TIMM8-TIMM13 complex mediates the import of proteins such as TIMM23, SLC25A12/ARALAR1 and SLC25A13/ARALAR2, while the predominant TIMM9-TIMM10 70 kDa complex mediates the import of much more proteins. The chain is Mitochondrial import inner membrane translocase subunit Tim8 A (Timm8a1) from Mus musculus (Mouse).